The following is a 642-amino-acid chain: Threonine--tRNA ligase (642 aa).

The region spanning Met1–Thr61 is the TGS domain. Positions Asp243 to Pro534 are catalytic. Cys334, His385, and His511 together coordinate Zn(2+).

It belongs to the class-II aminoacyl-tRNA synthetase family. Homodimer. It depends on Zn(2+) as a cofactor.

Its subcellular location is the cytoplasm. It carries out the reaction tRNA(Thr) + L-threonine + ATP = L-threonyl-tRNA(Thr) + AMP + diphosphate + H(+). In terms of biological role, catalyzes the attachment of threonine to tRNA(Thr) in a two-step reaction: L-threonine is first activated by ATP to form Thr-AMP and then transferred to the acceptor end of tRNA(Thr). Also edits incorrectly charged L-seryl-tRNA(Thr). In Yersinia enterocolitica serotype O:8 / biotype 1B (strain NCTC 13174 / 8081), this protein is Threonine--tRNA ligase.